Consider the following 741-residue polypeptide: Chromosome transmission fidelity protein 18 (741 aa).

183–190 (GPPGIGKT) contributes to the ATP binding site.

Belongs to the activator 1 small subunits family. CTF18 subfamily. As to quaternary structure, component of the CTF18-RFC complex, which consists of CTF18, CTF8, DCC1, RFC2, RFC3, RFC4 and RFC5. CTF18 interacts with ECO1.

It localises to the nucleus. In terms of biological role, essential for the fidelity of chromosome transmission. Required for the DNA replication block checkpoint. Component of the RFC-like complex CTF18-RFC which is required for efficient establishment of chromosome cohesion during S-phase and may load or unload POL30/PCNA. During a clamp loading circle, the RFC:clamp complex binds to DNA and the recognition of the double-stranded/single-stranded junction stimulates ATP hydrolysis by RFC. The complex presumably provides bipartite ATP sites in which one subunit supplies a catalytic site for hydrolysis of ATP bound to the neighboring subunit. Dissociation of RFC from the clamp leaves the clamp encircling DNA. This Saccharomyces cerevisiae (strain ATCC 204508 / S288c) (Baker's yeast) protein is Chromosome transmission fidelity protein 18 (CTF18).